Consider the following 271-residue polypeptide: 3-methyl-2-oxobutanoate hydroxymethyltransferase (271 aa).

Mg(2+) contacts are provided by D51 and D90. 3-methyl-2-oxobutanoate-binding positions include 51–52 (DS), D90, and K118. E120 is a Mg(2+) binding site. The active-site Proton acceptor is the E186.

Belongs to the PanB family. Homodecamer; pentamer of dimers. Mg(2+) is required as a cofactor.

The protein localises to the cytoplasm. It carries out the reaction 3-methyl-2-oxobutanoate + (6R)-5,10-methylene-5,6,7,8-tetrahydrofolate + H2O = 2-dehydropantoate + (6S)-5,6,7,8-tetrahydrofolate. It participates in cofactor biosynthesis; (R)-pantothenate biosynthesis; (R)-pantoate from 3-methyl-2-oxobutanoate: step 1/2. Its function is as follows. Catalyzes the reversible reaction in which hydroxymethyl group from 5,10-methylenetetrahydrofolate is transferred onto alpha-ketoisovalerate to form ketopantoate. This chain is 3-methyl-2-oxobutanoate hydroxymethyltransferase, found in Xanthomonas campestris pv. campestris (strain 8004).